A 243-amino-acid chain; its full sequence is 1-(5-phosphoribosyl)-5-[(5-phosphoribosylamino)methylideneamino] imidazole-4-carboxamide isomerase (243 aa).

The Proton acceptor role is filled by Asp8. Asp129 functions as the Proton donor in the catalytic mechanism.

It belongs to the HisA/HisF family.

Its subcellular location is the cytoplasm. The catalysed reaction is 1-(5-phospho-beta-D-ribosyl)-5-[(5-phospho-beta-D-ribosylamino)methylideneamino]imidazole-4-carboxamide = 5-[(5-phospho-1-deoxy-D-ribulos-1-ylimino)methylamino]-1-(5-phospho-beta-D-ribosyl)imidazole-4-carboxamide. Its pathway is amino-acid biosynthesis; L-histidine biosynthesis; L-histidine from 5-phospho-alpha-D-ribose 1-diphosphate: step 4/9. The sequence is that of 1-(5-phosphoribosyl)-5-[(5-phosphoribosylamino)methylideneamino] imidazole-4-carboxamide isomerase from Parvibaculum lavamentivorans (strain DS-1 / DSM 13023 / NCIMB 13966).